A 300-amino-acid chain; its full sequence is 4-hydroxy-tetrahydrodipicolinate synthase (300 aa).

Thr-45 provides a ligand contact to pyruvate. Tyr-140 serves as the catalytic Proton donor/acceptor. Residue Lys-169 is the Schiff-base intermediate with substrate of the active site. Pyruvate is bound at residue Val-210.

The protein belongs to the DapA family. As to quaternary structure, homotetramer; dimer of dimers.

Its subcellular location is the cytoplasm. The enzyme catalyses L-aspartate 4-semialdehyde + pyruvate = (2S,4S)-4-hydroxy-2,3,4,5-tetrahydrodipicolinate + H2O + H(+). Its pathway is amino-acid biosynthesis; L-lysine biosynthesis via DAP pathway; (S)-tetrahydrodipicolinate from L-aspartate: step 3/4. Catalyzes the condensation of (S)-aspartate-beta-semialdehyde [(S)-ASA] and pyruvate to 4-hydroxy-tetrahydrodipicolinate (HTPA). The sequence is that of 4-hydroxy-tetrahydrodipicolinate synthase from Helicobacter acinonychis (strain Sheeba).